Here is a 237-residue protein sequence, read N- to C-terminus: Mitochondrial carrier-like protein L276 (237 aa).

3 Solcar repeats span residues 1–83 (MAKY…FENK), 85–161 (YPYT…LNEY), and 164–233 (KPVV…LNKK). 5 consecutive transmembrane segments (helical) span residues 11-27 (AIAT…ICTF), 60-76 (VPAI…KYFL), 91-108 (MING…THPI), 140-160 (SFGK…TLNE), and 166-183 (VVSS…MQPL). Residues 191 to 196 (IYGLSL) carry the Substrate recognition motif. The helical transmembrane segment at 205–226 (YYRGLSLNLMRIVPHFVITMTT) threads the bilayer.

Belongs to the mitochondrial carrier (TC 2.A.29) family.

It is found in the host mitochondrion inner membrane. Its function is as follows. Transports dATP and to a lesser extent dTTP, TTP, UTP and ADP, possibly across the mitochondrial inner membrane. The sequence is that of Mitochondrial carrier-like protein L276 from Acanthamoeba polyphaga (Amoeba).